The primary structure comprises 146 residues: uncharacterized protein (146 aa).

Residues 6–26 traverse the membrane as a helical segment; the sequence is IPIFVISLSNISHIILAIFFF.

It localises to the membrane. This is an uncharacterized protein from Caenorhabditis elegans.